A 131-amino-acid chain; its full sequence is Profilin-4 (131 aa).

A disulfide bridge connects residues cysteine 13 and cysteine 115. Residues 81–97 (AVIRGKKGAGGITVKKT) carry the Involved in PIP2 interaction motif. Threonine 111 is subject to Phosphothreonine.

This sequence belongs to the profilin family. As to quaternary structure, occurs in many kinds of cells as a complex with monomeric actin in a 1:1 ratio. Post-translationally, phosphorylated by MAP kinases.

It localises to the cytoplasm. The protein resides in the cytoskeleton. Its function is as follows. Binds to actin and affects the structure of the cytoskeleton. At high concentrations, profilin prevents the polymerization of actin, whereas it enhances it at low concentrations. This Olea europaea (Common olive) protein is Profilin-4.